The primary structure comprises 837 residues: Outer membrane usher protein PsaC (837 aa).

Residues 1–23 (MKKLIVQFTTITLLMSTSFLVGA) form the signal peptide.

It belongs to the fimbrial export usher family.

It localises to the cell outer membrane. In terms of biological role, involved in the export and assembly of PsaA (pH 6) fimbrial subunits across the outer membrane. The protein is Outer membrane usher protein PsaC (psaC) of Yersinia pestis.